The primary structure comprises 439 residues: MNLLPNIESPVTRQEKMATVWDEAEQDGIGEEVLKMSTEEIIQRTRLLDSEIKIMKSEVLRVTHELQAMKDKIKENSEKIKVNKTLPYLVSNVIELLDVDPNDQEEDGANIDLDSQRKGKCAVIKTSTRQTYFLPVIGLVDAEKLKPGDLVGVNKDSYLILETLPTEYDSRVKAMEVDERPTEQYSDIGGLDKQIQELVEAIVLPMNHKEKFENLGIQPPKGVLMYGPPGTGKTLLARACAAQTKATFLKLAGPQLVQMFIGDGAKLVRDAFALAKEKAPSIIFIDELDAIGTKRFDSEKAGDREVQRTMLELLNQLDGFQPNTQVKVIAATNRVDILDPALLRSGRLDRKIEFPMPNEEARARIMQIHSRKMNVSPDVNYEELARCTDDFNGAQCKAVCVEAGMIALRRGATELTHEDYMEGILEVQAKKKANLQYYA.

An N-acetylmethionine modification is found at M1. S9 carries the phosphoserine modification. 227 to 234 (GPPGTGKT) is an ATP binding site. The residue at position 376 (S376) is a Phosphoserine.

It belongs to the AAA ATPase family. As to quaternary structure, component of the 19S proteasome regulatory particle complex. The 26S proteasome consists of a 20S core particle (CP) and two 19S regulatory subunits (RP). The regulatory particle is made of a lid composed of 9 subunits, a base containing 6 ATPases including PSMC3 and few additional components. Interacts with PAAF1. (Microbial infection) Interacts with HIV-1 Tat. Post-translationally, sumoylated by UBE2I in response to MEKK1-mediated stimuli.

The protein localises to the cytoplasm. It is found in the nucleus. Its function is as follows. Component of the 26S proteasome, a multiprotein complex involved in the ATP-dependent degradation of ubiquitinated proteins. This complex plays a key role in the maintenance of protein homeostasis by removing misfolded or damaged proteins, which could impair cellular functions, and by removing proteins whose functions are no longer required. Therefore, the proteasome participates in numerous cellular processes, including cell cycle progression, apoptosis, or DNA damage repair. PSMC3 belongs to the heterohexameric ring of AAA (ATPases associated with diverse cellular activities) proteins that unfolds ubiquitinated target proteins that are concurrently translocated into a proteolytic chamber and degraded into peptides. The polypeptide is 26S proteasome regulatory subunit 6A (PSMC3) (Homo sapiens (Human)).